Here is a 702-residue protein sequence, read N- to C-terminus: Ribosomal RNA large subunit methyltransferase K/L (702 aa).

The THUMP domain occupies 43–154 (LVYQSLMWSR…KETASIALDL (112 aa)).

The protein belongs to the methyltransferase superfamily. RlmKL family.

Its subcellular location is the cytoplasm. It catalyses the reaction guanosine(2445) in 23S rRNA + S-adenosyl-L-methionine = N(2)-methylguanosine(2445) in 23S rRNA + S-adenosyl-L-homocysteine + H(+). The catalysed reaction is guanosine(2069) in 23S rRNA + S-adenosyl-L-methionine = N(2)-methylguanosine(2069) in 23S rRNA + S-adenosyl-L-homocysteine + H(+). In terms of biological role, specifically methylates the guanine in position 2445 (m2G2445) and the guanine in position 2069 (m7G2069) of 23S rRNA. This Shigella boydii serotype 18 (strain CDC 3083-94 / BS512) protein is Ribosomal RNA large subunit methyltransferase K/L.